A 210-amino-acid chain; its full sequence is 23.5 kDa heat shock protein, mitochondrial (210 aa).

A mitochondrion-targeting transit peptide spans 1 to 20; it reads MASSSALALRRLLSSSTVAV. The 109-residue stretch at 102–210 folds into the sHSP domain; the sequence is MGASGVRRGW…RNNIRHINVD (109 aa).

The protein belongs to the small heat shock protein (HSP20) family. May form oligomeric structures.

It is found in the mitochondrion. The chain is 23.5 kDa heat shock protein, mitochondrial (HSP23.5) from Arabidopsis thaliana (Mouse-ear cress).